The chain runs to 69 residues: Amphipathic peptide StCT2 (69 aa).

Residues 1-23 (MKTQFAVLIISMILMQMLVQTEA) form the signal peptide. Ile37 is modified (isoleucine amide). Positions 41–69 (SLRNQDQFDNMFDSDLSDADLKLLDDLFD) are excised as a propeptide.

The protein belongs to the non-disulfide-bridged peptide (NDBP) superfamily. Short antimicrobial peptide (group 4) family. Expressed by the venom gland.

The protein resides in the secreted. The protein localises to the target cell membrane. In terms of biological role, antimicrobial peptide that is rapidly bactericidal against Gram-positive bacteria. This chain is Amphipathic peptide StCT2, found in Scorpiops tibetanus (Scorpion).